The sequence spans 169 residues: UPF0303 protein BruAb1_1406 (169 aa).

The protein belongs to the UPF0303 family.

The sequence is that of UPF0303 protein BruAb1_1406 from Brucella abortus biovar 1 (strain 9-941).